We begin with the raw amino-acid sequence, 21 residues long: Bombinin-H1/H3 (21 aa).

Ile2 carries the post-translational modification D-allo-isoleucine; in form H3. Residue Ile20 is modified to Isoleucine amide.

The protein belongs to the bombinin family. Expressed by the skin glands.

It localises to the secreted. Its function is as follows. Has antimicrobial and hemolytic activities. The polypeptide is Bombinin-H1/H3 (Bombina variegata (Yellow-bellied toad)).